The primary structure comprises 101 residues: DNA-directed RNA polymerase subunit beta (101 aa).

Residues 74–101 (KRRLSALGPGGLSRERAGLEVRDVHSSH) form a disordered region. A compositionally biased stretch (basic and acidic residues) spans 86–101 (SRERAGLEVRDVHSSH).

Belongs to the RNA polymerase beta chain family. The RNAP catalytic core consists of 2 alpha, 1 beta, 1 beta' and 1 omega subunit. When a sigma factor is associated with the core the holoenzyme is formed, which can initiate transcription.

It catalyses the reaction RNA(n) + a ribonucleoside 5'-triphosphate = RNA(n+1) + diphosphate. Functionally, DNA-dependent RNA polymerase catalyzes the transcription of DNA into RNA using the four ribonucleoside triphosphates as substrates. This chain is DNA-directed RNA polymerase subunit beta (rpoB), found in Mycolicibacterium peregrinum (Mycobacterium peregrinum).